Consider the following 196-residue polypeptide: DnaA initiator-associating protein DiaA (196 aa).

Positions 34–196 constitute an SIS domain; sequence VVQSLLNGNK…DNTLFPHQEV (163 aa).

It belongs to the SIS family. DiaA subfamily. Homotetramer; dimer of dimers.

Its function is as follows. Required for the timely initiation of chromosomal replication via direct interactions with the DnaA initiator protein. The chain is DnaA initiator-associating protein DiaA from Erwinia tasmaniensis (strain DSM 17950 / CFBP 7177 / CIP 109463 / NCPPB 4357 / Et1/99).